Reading from the N-terminus, the 258-residue chain is Tritrans,polycis-undecaprenyl-diphosphate synthase (geranylgeranyl-diphosphate specific) (258 aa).

Aspartate 37 is an active-site residue. Position 37 (aspartate 37) interacts with Mg(2+). Residues 38–41 (GNRR), histidine 54, and 82–84 (STE) each bind substrate. The active-site Proton acceptor is asparagine 85. Residues phenylalanine 86, arginine 88, arginine 207, and 213–215 (RIS) contribute to the substrate site. Glutamate 226 contacts Mg(2+).

The protein belongs to the UPP synthase family. As to quaternary structure, homodimer. Mg(2+) serves as cofactor.

The enzyme catalyses geranylgeranyl diphosphate + 7 isopentenyl diphosphate = tri-trans,hepta-cis-undecaprenyl diphosphate + 7 diphosphate. Catalyzes the sequential condensation of isopentenyl diphosphate (IPP) with geranylgeranyl diphosphate (GGPP) to yield (2Z,6Z,10Z,14Z,18Z,22Z,26Z,30E,34E,38E)-undecaprenyl diphosphate (tritrans,heptacis-UPP). It is probably the precursor of glycosyl carrier lipids. This chain is Tritrans,polycis-undecaprenyl-diphosphate synthase (geranylgeranyl-diphosphate specific), found in Thermoplasma acidophilum (strain ATCC 25905 / DSM 1728 / JCM 9062 / NBRC 15155 / AMRC-C165).